Consider the following 461-residue polypeptide: Chromosomal replication initiator protein DnaA (461 aa).

The domain I, interacts with DnaA modulators stretch occupies residues 1–83 (MTASLWQQCL…LHFAVGRRPT (83 aa)). The interval 83–124 (TAATVQMNTAAAPVADVRIGPAITVPSWTSKQDAMPEINHKS) is domain II. The interval 125–341 (NINETYTFEN…GALNRVIANA (217 aa)) is domain III, AAA+ region. 4 residues coordinate ATP: glycine 169, glycine 171, lysine 172, and threonine 173. A domain IV, binds dsDNA region spans residues 342 to 461 (RFTGKPINID…YSNLIRTLSS (120 aa)).

Belongs to the DnaA family. As to quaternary structure, oligomerizes as a right-handed, spiral filament on DNA at oriC.

It localises to the cytoplasm. Its function is as follows. Plays an essential role in the initiation and regulation of chromosomal replication. ATP-DnaA binds to the origin of replication (oriC) to initiate formation of the DNA replication initiation complex once per cell cycle. Binds the DnaA box (a 9 base pair repeat at the origin) and separates the double-stranded (ds)DNA. Forms a right-handed helical filament on oriC DNA; dsDNA binds to the exterior of the filament while single-stranded (ss)DNA is stabiized in the filament's interior. The ATP-DnaA-oriC complex binds and stabilizes one strand of the AT-rich DNA unwinding element (DUE), permitting loading of DNA polymerase. After initiation quickly degrades to an ADP-DnaA complex that is not apt for DNA replication. Binds acidic phospholipids. This Tolumonas auensis (strain DSM 9187 / NBRC 110442 / TA 4) protein is Chromosomal replication initiator protein DnaA.